We begin with the raw amino-acid sequence, 705 residues long: Calpastatin (705 aa).

Disordered regions lie at residues 1 to 211 (MNPT…PNDA) and 226 to 493 (LTTC…PLPP). 2 stretches are compositionally biased toward basic and acidic residues: residues 7–17 (KAVKTEPEKKP) and 24–62 (VVHE…EKAV). Lys-10 is covalently cross-linked (Glycyl lysine isopeptide (Lys-Gly) (interchain with G-Cter in SUMO2)). The residue at position 28 (Lys-28) is an N6-acetyllysine. Low complexity-rich tracts occupy residues 63–72 (SKSSEQPPSE) and 94–103 (PAAAAAASAE). Ser-65 carries the post-translational modification Phosphoserine. Thr-115 carries the post-translational modification Phosphothreonine. The segment covering 135–151 (TALDDLIDTLGEPEEMK) has biased composition (acidic residues). The stretch at 149-202 (EMKEDNTTYTGPEVSDPMSSTYIEELGKRESTPPPKYKELLNKEEGIAGPPPDS) is one Inhibitory domain 1 repeat. A compositionally biased stretch (basic and acidic residues) spans 173-194 (ELGKRESTPPPKYKELLNKEEG). Residues Ser-202 and Ser-230 each carry the phosphoserine modification. The span at 234 to 248 (DGKETEKEKSTEEAL) shows a compositional bias: basic and acidic residues. The span at 275–286 (TEQALQALSASL) shows a compositional bias: polar residues. Basic and acidic residues-rich tracts occupy residues 289–317 (RKPE…KKCG) and 327–352 (YRLK…KPLS). One copy of the Inhibitory domain 2 repeat lies at 292–344 (EPELDPSSIREVDEAKAKEEKVKKCGEDEETVPSEYRLKPATDKDGKPLLPEA). A phosphoserine mark is found at Ser-352, Ser-354, and Ser-361. A compositionally biased stretch (acidic residues) spans 355–364 (ELIDELSEDF). A compositionally biased stretch (basic and acidic residues) spans 365–381 (DQSKPTEKQSKPTEKTE). Ser-428 bears the Phosphoserine mark. Basic and acidic residues predominate over residues 430–489 (PKKEADPEDGKPVEDKVKEKAKEEDRENFGEKEETIPPDYRLEEAKDKDGKPLLPKEVKE). One copy of the Inhibitory domain 3 repeat lies at 434-487 (ADPEDGKPVEDKVKEKAKEEDRENFGEKEETIPPDYRLEEAKDKDGKPLLPKEV). A phosphoserine mark is found at Ser-504 and Ser-515. The interval 527–705 (VSEVVSQTPA…KPKADGKSTS (179 aa)) is disordered. The span at 533 to 542 (QTPAPTTQAA) shows a compositional bias: low complexity. Ser-563 bears the Phosphoserine mark. One copy of the Inhibitory domain 4 repeat lies at 571–624 (PDPDENKPVEDKVKEKAKAEHRDKLGERDDTIPPKYQHLLDDNKEGTPGKPKDQ). The segment covering 571 to 625 (PDPDENKPVEDKVKEKAKAEHRDKLGERDDTIPPKYQHLLDDNKEGTPGKPKDQR) has biased composition (basic and acidic residues). Residues 651–662 (DSCPSTTETSTD) are compositionally biased toward low complexity. Residues 683 to 705 (KAKDSTKAKEETSKPKADGKSTS) are compositionally biased toward basic and acidic residues.

Belongs to the protease inhibitor I27 (calpastatin) family.

Specific inhibition of calpain (calcium-dependent cysteine protease). Plays a key role in postmortem tenderization of meat and have been proposed to be involved in muscle protein degradation in living tissue. In Bos taurus (Bovine), this protein is Calpastatin (CAST).